Here is a 142-residue protein sequence, read N- to C-terminus: Large ribosomal subunit protein uL13 (142 aa).

Belongs to the universal ribosomal protein uL13 family. As to quaternary structure, part of the 50S ribosomal subunit.

In terms of biological role, this protein is one of the early assembly proteins of the 50S ribosomal subunit, although it is not seen to bind rRNA by itself. It is important during the early stages of 50S assembly. The polypeptide is Large ribosomal subunit protein uL13 (Edwardsiella ictaluri (strain 93-146)).